Here is a 579-residue protein sequence, read N- to C-terminus: Putative laccase-9 (579 aa).

The signal sequence occupies residues 1 to 27 (MGTAKLPALLWLLAGVVLALAVNPAHG). Plastocyanin-like domains are found at residues 36–152 (FITE…PKRG) and 162–319 (KEIP…YTDS). N-linked (GlcNAc...) asparagine glycosylation is found at asparagine 41 and asparagine 82. Histidine 86 and histidine 88 together coordinate Cu cation. Residue asparagine 114 is glycosylated (N-linked (GlcNAc...) asparagine). The Cu cation site is built by histidine 131 and histidine 133. Asparagine 307, asparagine 405, and asparagine 446 each carry an N-linked (GlcNAc...) asparagine glycan. The Plastocyanin-like 3 domain occupies 436-563 (PTAFVDPPVN…DTVFIVKDGK (128 aa)). Cu cation contacts are provided by histidine 480, histidine 483, and histidine 485. N-linked (GlcNAc...) asparagine glycosylation occurs at asparagine 496. Cu cation-binding residues include histidine 542, cysteine 543, histidine 544, histidine 548, and methionine 553.

It belongs to the multicopper oxidase family. Requires Cu cation as cofactor.

Its subcellular location is the secreted. The protein resides in the extracellular space. The protein localises to the apoplast. The enzyme catalyses 4 hydroquinone + O2 = 4 benzosemiquinone + 2 H2O. Its function is as follows. Lignin degradation and detoxification of lignin-derived products. In Oryza sativa subsp. japonica (Rice), this protein is Putative laccase-9 (LAC9).